We begin with the raw amino-acid sequence, 119 residues long: Large ribosomal subunit protein bL20 (119 aa).

It belongs to the bacterial ribosomal protein bL20 family.

In terms of biological role, binds directly to 23S ribosomal RNA and is necessary for the in vitro assembly process of the 50S ribosomal subunit. It is not involved in the protein synthesizing functions of that subunit. This Enterococcus faecalis (strain ATCC 700802 / V583) protein is Large ribosomal subunit protein bL20.